The chain runs to 946 residues: Leucine--tRNA ligase (946 aa).

A 'HIGH' region motif is present at residues 43-53; it reads PYPNGTIHIGH. Residues 638–642 carry the 'KMSKS' region motif; it reads KMSKS. Lys641 is a binding site for ATP.

The protein belongs to the class-I aminoacyl-tRNA synthetase family.

The protein localises to the cytoplasm. The catalysed reaction is tRNA(Leu) + L-leucine + ATP = L-leucyl-tRNA(Leu) + AMP + diphosphate. The protein is Leucine--tRNA ligase of Pyrobaculum calidifontis (strain DSM 21063 / JCM 11548 / VA1).